We begin with the raw amino-acid sequence, 158 residues long: 18.2 kDa class I heat shock protein (158 aa).

The region spanning 44–158 (ENSAFVSTRV…PEVKTIDISG (115 aa)) is the sHSP domain.

Belongs to the small heat shock protein (HSP20) family. As to quaternary structure, forms oligomeric structures.

The protein resides in the cytoplasm. The polypeptide is 18.2 kDa class I heat shock protein (HSP18.2) (Medicago sativa (Alfalfa)).